Consider the following 594-residue polypeptide: UvrABC system protein C (594 aa).

One can recognise a GIY-YIG domain in the interval 14 to 91 (DSPGCYLHKD…IQENMPKYNI (78 aa)). The UVR domain occupies 196–231 (DKIIDDLRSKMLEASHNQEFERAAEYRDLISGIATM).

Belongs to the UvrC family. Interacts with UvrB in an incision complex.

The protein resides in the cytoplasm. The UvrABC repair system catalyzes the recognition and processing of DNA lesions. UvrC both incises the 5' and 3' sides of the lesion. The N-terminal half is responsible for the 3' incision and the C-terminal half is responsible for the 5' incision. The polypeptide is UvrABC system protein C (Streptococcus equi subsp. equi (strain 4047)).